A 967-amino-acid chain; its full sequence is Aminopeptidase N (967 aa).

The Cytoplasmic portion of the chain corresponds to 1–8; that stretch reads MAKGFYIS. A helical; Signal-anchor for type II membrane protein transmembrane segment spans residues 9–32; it reads KPVGILAILLGVAAVCTIIALSVV. A cytosolic Ser/Thr-rich junction region spans residues 33–66; the sequence is YSQEKNRSTESSTAASTAAPTGPTTTVATTLDQS. Over 33–967 the chain is Extracellular; it reads YSQEKNRSTE…VVLRWFTENS (935 aa). N-linked (GlcNAc...) asparagine glycosylation is present at Asn38. Residues 41–61 are disordered; sequence TESSTAASTAAPTGPTTTVAT. The interval 67 to 967 is metalloprotease; sequence KPWNVYRLPK…VVLRWFTENS (901 aa). 2 N-linked (GlcNAc...) asparagine glycosylation sites follow: Asn84 and Asn126. Sulfotyrosine is present on Tyr175. Residues Asn233 and Asn338 are each glycosylated (N-linked (GlcNAc...) asparagine). Position 351-355 (351-355) interacts with substrate; the sequence is GAMEN. His387 is a binding site for Zn(2+). Glu388 (proton acceptor) is an active-site residue. Residues His391 and Glu410 each contribute to the Zn(2+) site. Sulfotyrosine is present on Tyr418. 3 N-linked (GlcNAc...) asparagine glycosylation sites follow: Asn626, Asn682, and Asn740. The interval 670-840 is interaction with FCoV and TGEV spike glycoprotein; sequence ASAQKVPVTL…GALACSNQVW (171 aa). 2 disulfides stabilise this stretch: Cys762-Cys769 and Cys799-Cys835.

Belongs to the peptidase M1 family. As to quaternary structure, homodimer. Interacts with SLC6A19. In terms of assembly, (Microbial infection) Interacts with FCoV, CCoV, TGEV and HCoV-229E spike glycoprotein. It depends on Zn(2+) as a cofactor. Post-translationally, sulfated. N- and O-glycosylated. In terms of processing, may undergo proteolysis and give rise to a soluble form.

It localises to the cell membrane. The catalysed reaction is Release of an N-terminal amino acid, Xaa-|-Yaa- from a peptide, amide or arylamide. Xaa is preferably Ala, but may be most amino acids including Pro (slow action). When a terminal hydrophobic residue is followed by a prolyl residue, the two may be released as an intact Xaa-Pro dipeptide.. Broad specificity aminopeptidase which plays a role in the final digestion of peptides generated from hydrolysis of proteins by gastric and pancreatic proteases. Also involved in the processing of various peptides including peptide hormones, such as angiotensin III and IV, neuropeptides, and chemokines. May also be involved the cleavage of peptides bound to major histocompatibility complex class II molecules of antigen presenting cells. May have a role in angiogenesis and promote cholesterol crystallization. May have a role in amino acid transport by acting as binding partner of amino acid transporter SLC6A19 and regulating its activity. Its function is as follows. (Microbial infection) In case of feline coronavirus (FCoV) infection, serves as a receptor for FCoV spike glycoprotein. It is as well a receptor for other serogroup I coronaviruses, like canine coronavirus (CCoV), porcine transmissible gastroenteritis virus (TGEV), and human coronavirus 229E (HCoV-229E). Also serves as a receptor for infectious bronchitis virus (IBV, Arkansas 99 serotype) in serogroup III. This Felis catus (Cat) protein is Aminopeptidase N (ANPEP).